We begin with the raw amino-acid sequence, 78 residues long: UPF0270 protein PC1_3850 (78 aa).

This sequence belongs to the UPF0270 family.

This Pectobacterium carotovorum subsp. carotovorum (strain PC1) protein is UPF0270 protein PC1_3850.